Here is a 383-residue protein sequence, read N- to C-terminus: Podocin (383 aa).

The segment covering 1-41 (MERRARSSSRESRGRGGRTPHKENKRAKAERSGGGRGRQEA) has biased composition (basic and acidic residues). Residues 1–76 (MERRARSSSR…VDEVRGSGEE (76 aa)) are disordered. Residues 1–102 (MERRARSSSR…TKSSGLGACE (102 aa)) lie on the Cytoplasmic side of the membrane. Cys101 carries S-palmitoyl cysteine lipidation. Residues 103 to 123 (WLLVLISLLFIIMTFPFSIWF) lie within the membrane without spanning it. Topologically, residues 124–383 (CVKVVQEYER…NPKKKDSPML (260 aa)) are cytoplasmic. A glycan (N-linked (GlcNAc...) asparagine) is linked at Gln287. A disordered region spans residues 355 to 383 (NRTQGSLPFPSPSKPVEPLNPKKKDSPML). Residues 374–383 (NPKKKDSPML) are compositionally biased toward basic and acidic residues.

Belongs to the band 7/mec-2 family. In terms of assembly, interacts with nephrin/NPHS1 and KIRREL1. Interacts directly with CD2AP. Interacts with DDN. Post-translationally, glycosylated. In terms of tissue distribution, almost exclusively expressed in the podocytes of fetal and mature kidney glomeruli.

It is found in the cell membrane. Its subcellular location is the endoplasmic reticulum. Plays a role in the regulation of glomerular permeability, acting probably as a linker between the plasma membrane and the cytoskeleton. This is Podocin (NPHS2) from Homo sapiens (Human).